Reading from the N-terminus, the 298-residue chain is Anamorsin homolog (298 aa).

An N-terminal SAM-like domain region spans residues 1–143; sequence MTQLIITHQS…IKAEKPSWKP (143 aa). Positions 143-162 are linker; it reads PEEGKVLVDDIDLEGSVPDI. Residues C175, C182, C185, and C187 each coordinate [2Fe-2S] cluster. Positions 175–187 are fe-S binding site A; it reads CKSKERACNNCNC. [4Fe-4S] cluster contacts are provided by C218, C221, C229, and C232. 2 short sequence motifs (cx2C motif) span residues 218-221 and 229-232; these read CGNC and CSGC. Residues 218-232 form a fe-S binding site B region; that stretch reads CGNCYLGDAFRCSGC.

This sequence belongs to the anamorsin family. Monomer. [2Fe-2S] cluster is required as a cofactor. [4Fe-4S] cluster serves as cofactor.

Its subcellular location is the cytoplasm. It localises to the mitochondrion intermembrane space. Functionally, component of the cytosolic iron-sulfur (Fe-S) protein assembly (CIA) machinery. Required for the maturation of extramitochondrial Fe-S proteins. Part of an electron transfer chain functioning in an early step of cytosolic Fe-S biogenesis, facilitating the de novo assembly of a [4Fe-4S] cluster on the cytosolic Fe-S scaffold complex. Electrons are transferred from NADPH via a FAD- and FMN-containing diflavin oxidoreductase. Together with the diflavin oxidoreductase, also required for the assembly of the diferric tyrosyl radical cofactor of ribonucleotide reductase (RNR), probably by providing electrons for reduction during radical cofactor maturation in the catalytic small subunit. This chain is Anamorsin homolog, found in Cryptosporidium parvum (strain Iowa II).